The sequence spans 436 residues: UDP-glucuronate 4-epimerase 5 (436 aa).

A run of 2 helical transmembrane segments spans residues 36 to 56 and 95 to 115; these read LTLW…LSPP and GLTV…SIAL. 97–128 provides a ligand contact to NAD(+); sequence TVLVTGASGFVGTHVSIALRRRGDGVLGLDNF. Residue Tyr247 is the Proton acceptor of the active site.

This sequence belongs to the NAD(P)-dependent epimerase/dehydratase family. Homodimer. As to expression, in leaves, pollen and siliques, but not in roots or flowers.

It is found in the golgi apparatus. Its subcellular location is the golgi stack membrane. It carries out the reaction UDP-alpha-D-glucuronate = UDP-alpha-D-galacturonate. Functionally, involved in the synthesis of the negatively charged monosaccharide that forms the backbone of pectic cell wall components. The protein is UDP-glucuronate 4-epimerase 5 (GAE5) of Arabidopsis thaliana (Mouse-ear cress).